Consider the following 222-residue polypeptide: GTP cyclohydrolase 1 (222 aa).

Residues C111, H114, and C182 each contribute to the Zn(2+) site.

The protein belongs to the GTP cyclohydrolase I family. In terms of assembly, homomer.

The catalysed reaction is GTP + H2O = 7,8-dihydroneopterin 3'-triphosphate + formate + H(+). It participates in cofactor biosynthesis; 7,8-dihydroneopterin triphosphate biosynthesis; 7,8-dihydroneopterin triphosphate from GTP: step 1/1. In Salmonella gallinarum (strain 287/91 / NCTC 13346), this protein is GTP cyclohydrolase 1.